The chain runs to 451 residues: Opioid growth factor receptor-like protein 1 (451 aa).

2 disordered regions span residues 1–89 and 308–451; these read MGNL…TAKP and ENFI…VLVQ. Over residues 43–66 the composition is skewed to low complexity; the sequence is PGQESEQPAQPPEQAGGRPGASPA. Residues 322-341 show a composition bias toward polar residues; the sequence is GSKAQKMSSPLASSHNSQTS. Composition is skewed to basic and acidic residues over residues 362–381 and 389–399; these read TAED…DRPS and AKPRNTEKDSN. The span at 431–443 shows a compositional bias: low complexity; it reads NDNQDNENPGNTN.

This sequence belongs to the opioid growth factor receptor family. In terms of tissue distribution, ubiquitous.

The sequence is that of Opioid growth factor receptor-like protein 1 (OGFRL1) from Homo sapiens (Human).